The following is a 502-amino-acid chain: Cardiolipin synthase (502 aa).

Transmembrane regions (helical) follow at residues 7 to 27 (VIIF…YWEG), 29 to 49 (LLGG…FVIS), and 59 to 79 (ITWL…YLMF). PLD phosphodiesterase domains lie at 237–264 (INFR…GDEY) and 415–442 (SKGF…DMRS). Catalysis depends on residues His242, Lys244, Asp249, His420, Lys422, and Asp427.

This sequence belongs to the phospholipase D family. Cardiolipin synthase subfamily.

The protein localises to the cell membrane. The catalysed reaction is 2 a 1,2-diacyl-sn-glycero-3-phospho-(1'-sn-glycerol) = a cardiolipin + glycerol. Its function is as follows. Catalyzes the reversible phosphatidyl group transfer from one phosphatidylglycerol molecule to another to form cardiolipin (CL) (diphosphatidylglycerol) and glycerol. The sequence is that of Cardiolipin synthase (cls) from Geobacillus sp. (strain WCH70).